The sequence spans 272 residues: TLC domain-containing protein 4 C (272 aa).

7 helical membrane passes run 16–36, 71–91, 103–123, 128–148, 155–175, 196–216, and 233–253; these read FSNS…FIIY, VSMI…VESF, SLLM…IICY, LVGT…IYVA, CFVP…PLNM, FVIT…IYLV, and VFIT…FLLI. The TLC domain occupies 61-261; sequence KKKLEWDQRV…LIKKLYQTYL (201 aa).

This sequence belongs to the TLCD4 family.

It localises to the membrane. The protein is TLC domain-containing protein 4 C (tlcd4c) of Dictyostelium discoideum (Social amoeba).